A 153-amino-acid polypeptide reads, in one-letter code: Probable histone H2A.4 (153 aa).

The segment covering 1–12 (MDSGTKVKKGAA) has biased composition (basic residues). Disordered stretches follow at residues 1 to 30 (MDSG…RSVK) and 129 to 153 (KSEK…PKKS). Positions 133–147 (AASTTKTPKSPSKAT) are enriched in low complexity. The short motif at 149 to 152 (SPKK) is the SPKK motif element.

Belongs to the histone H2A family. As to quaternary structure, the nucleosome is a histone octamer containing two molecules each of H2A, H2B, H3 and H4 assembled in one H3-H4 heterotetramer and two H2A-H2B heterodimers. The octamer wraps approximately 147 bp of DNA. Post-translationally, not ubiquitinated.

The protein localises to the nucleus. It localises to the chromosome. In terms of biological role, core component of nucleosome. Nucleosomes wrap and compact DNA into chromatin, limiting DNA accessibility to the cellular machineries which require DNA as a template. Histones thereby play a central role in transcription regulation, DNA repair, DNA replication and chromosomal stability. DNA accessibility is regulated via a complex set of post-translational modifications of histones, also called histone code, and nucleosome remodeling. The polypeptide is Probable histone H2A.4 (Arabidopsis thaliana (Mouse-ear cress)).